Reading from the N-terminus, the 406-residue chain is Cysteine desulfurase (406 aa).

Position 226 is an N6-(pyridoxal phosphate)lysine (Lys-226). The active-site Cysteine persulfide intermediate is the Cys-364.

This sequence belongs to the class-V pyridoxal-phosphate-dependent aminotransferase family. Csd subfamily. In terms of assembly, homodimer. Interacts with SufE and the SufBCD complex composed of SufB, SufC and SufD. The interaction with SufE is required to mediate the direct transfer of the sulfur atom from the S-sulfanylcysteine. Pyridoxal 5'-phosphate is required as a cofactor.

Its subcellular location is the cytoplasm. The catalysed reaction is (sulfur carrier)-H + L-cysteine = (sulfur carrier)-SH + L-alanine. It catalyses the reaction L-selenocysteine + AH2 = hydrogenselenide + L-alanine + A + H(+). Its pathway is cofactor biosynthesis; iron-sulfur cluster biosynthesis. Its function is as follows. Cysteine desulfurases mobilize the sulfur from L-cysteine to yield L-alanine, an essential step in sulfur metabolism for biosynthesis of a variety of sulfur-containing biomolecules. Component of the suf operon, which is activated and required under specific conditions such as oxidative stress and iron limitation. Acts as a potent selenocysteine lyase in vitro, that mobilizes selenium from L-selenocysteine. Selenocysteine lyase activity is however unsure in vivo. In Escherichia coli O157:H7 (strain EC4115 / EHEC), this protein is Cysteine desulfurase.